The following is a 101-amino-acid chain: MLTLAHYLVLGAILFAIAIVGIFLNRRNVIIILMSIELMLLAVNTNFVAFSHYLGDVHGQIFVFFVLTVAAAEAAIGLAILVTLFRKLDTINVEDLDQLKG.

3 helical membrane passes run 4 to 24 (LAHYLVLGAILFAIAIVGIFL), 30 to 50 (IIILMSIELMLLAVNTNFVAF), and 61 to 81 (IFVFFVLTVAAAEAAIGLAIL).

Belongs to the complex I subunit 4L family. NDH-1 is composed of 14 different subunits. Subunits NuoA, H, J, K, L, M, N constitute the membrane sector of the complex.

Its subcellular location is the cell inner membrane. The catalysed reaction is a quinone + NADH + 5 H(+)(in) = a quinol + NAD(+) + 4 H(+)(out). Functionally, NDH-1 shuttles electrons from NADH, via FMN and iron-sulfur (Fe-S) centers, to quinones in the respiratory chain. The immediate electron acceptor for the enzyme in this species is believed to be ubiquinone. Couples the redox reaction to proton translocation (for every two electrons transferred, four hydrogen ions are translocated across the cytoplasmic membrane), and thus conserves the redox energy in a proton gradient. The sequence is that of NADH-quinone oxidoreductase subunit K from Burkholderia cenocepacia (strain HI2424).